Reading from the N-terminus, the 526-residue chain is Light-independent protochlorophyllide reductase subunit B (526 aa).

Position 36 (Asp-36) interacts with [4Fe-4S] cluster. Residue Asp-290 is the Proton donor of the active site. Gly-425 to Leu-426 contacts substrate.

Belongs to the ChlB/BchB/BchZ family. In terms of assembly, protochlorophyllide reductase is composed of three subunits; ChlL, ChlN and ChlB. Forms a heterotetramer of two ChlB and two ChlN subunits. It depends on [4Fe-4S] cluster as a cofactor.

The catalysed reaction is chlorophyllide a + oxidized 2[4Fe-4S]-[ferredoxin] + 2 ADP + 2 phosphate = protochlorophyllide a + reduced 2[4Fe-4S]-[ferredoxin] + 2 ATP + 2 H2O. The protein operates within porphyrin-containing compound metabolism; chlorophyll biosynthesis (light-independent). Functionally, component of the dark-operative protochlorophyllide reductase (DPOR) that uses Mg-ATP and reduced ferredoxin to reduce ring D of protochlorophyllide (Pchlide) to form chlorophyllide a (Chlide). This reaction is light-independent. The NB-protein (ChlN-ChlB) is the catalytic component of the complex. This Prochlorococcus marinus (strain MIT 9515) protein is Light-independent protochlorophyllide reductase subunit B.